The following is a 320-amino-acid chain: Ribonuclease Z (320 aa).

Histidine 62, histidine 64, aspartate 66, histidine 67, histidine 139, aspartate 210, and histidine 268 together coordinate Zn(2+). The Proton acceptor role is filled by aspartate 66.

Belongs to the RNase Z family. Homodimer. Zn(2+) is required as a cofactor.

The enzyme catalyses Endonucleolytic cleavage of RNA, removing extra 3' nucleotides from tRNA precursor, generating 3' termini of tRNAs. A 3'-hydroxy group is left at the tRNA terminus and a 5'-phosphoryl group is left at the trailer molecule.. In terms of biological role, zinc phosphodiesterase, which displays some tRNA 3'-processing endonuclease activity. Probably involved in tRNA maturation, by removing a 3'-trailer from precursor tRNA. This is Ribonuclease Z from Cyanothece sp. (strain PCC 7425 / ATCC 29141).